The sequence spans 573 residues: Peptidyl-prolyl cis-trans isomerase-like 2 (573 aa).

The U-box domain occupies 37–119 (QRLPFDCCAL…GNLHDPITYK (83 aa)). Positions 223-247 (KNKSGQSPAPTPSKIDDGKGQEKKE) are disordered. Residues 236–247 (KIDDGKGQEKKE) show a composition bias toward basic and acidic residues. Positions 312-469 (SKAYATITTN…RDIVIQGVTV (158 aa)) constitute a PPIase cyclophilin-type domain. Positions 489–510 (DQSDAALKRRAEAQKEREKDRT) are enriched in basic and acidic residues. Residues 489–515 (DQSDAALKRRAEAQKEREKDRTTWLGT) form a disordered region.

Belongs to the cyclophilin-type PPIase family. PPIL2 subfamily.

The protein localises to the nucleus. The enzyme catalyses [protein]-peptidylproline (omega=180) = [protein]-peptidylproline (omega=0). The catalysed reaction is S-ubiquitinyl-[E2 ubiquitin-conjugating enzyme]-L-cysteine + [acceptor protein]-L-lysine = [E2 ubiquitin-conjugating enzyme]-L-cysteine + N(6)-ubiquitinyl-[acceptor protein]-L-lysine.. It participates in protein modification; protein ubiquitination. Its function is as follows. May catalyze the cis-trans isomerization of proline imidic peptide bonds in oligopeptides thereby assisting the folding of proteins. May also function as a chaperone, playing a role in intracellular transport of proteins. May also have a protein ubiquitin ligase activity acting as an E3 ubiquitin protein ligase or as a ubiquitin-ubiquitin ligase promoting elongation of ubiquitin chains on proteins. In Cryptococcus neoformans var. neoformans serotype D (strain B-3501A) (Filobasidiella neoformans), this protein is Peptidyl-prolyl cis-trans isomerase-like 2 (CYP8).